Here is a 497-residue protein sequence, read N- to C-terminus: Glycerol kinase (497 aa).

Residue Thr11 participates in ADP binding. ATP contacts are provided by Thr11, Ser12, and Ser13. A sn-glycerol 3-phosphate-binding site is contributed by Thr11. Arg15 provides a ligand contact to ADP. Sn-glycerol 3-phosphate is bound by residues Arg81, Glu82, Tyr133, and Asp242. Residues Arg81, Glu82, Tyr133, Asp242, and Gln243 each contribute to the glycerol site. ADP-binding residues include Thr264 and Gly307. Thr264, Gly307, Gln311, and Gly412 together coordinate ATP. Residues Gly412 and Asn416 each contribute to the ADP site.

Belongs to the FGGY kinase family.

It carries out the reaction glycerol + ATP = sn-glycerol 3-phosphate + ADP + H(+). It participates in polyol metabolism; glycerol degradation via glycerol kinase pathway; sn-glycerol 3-phosphate from glycerol: step 1/1. Inhibited by fructose 1,6-bisphosphate (FBP). Functionally, key enzyme in the regulation of glycerol uptake and metabolism. Catalyzes the phosphorylation of glycerol to yield sn-glycerol 3-phosphate. The polypeptide is Glycerol kinase (Polaromonas sp. (strain JS666 / ATCC BAA-500)).